Here is a 120-residue protein sequence, read N- to C-terminus: UPF0145 protein Mboo_1021 (120 aa).

Belongs to the UPF0145 family.

The sequence is that of UPF0145 protein Mboo_1021 from Methanoregula boonei (strain DSM 21154 / JCM 14090 / 6A8).